We begin with the raw amino-acid sequence, 189 residues long: Tumor protein p53-inducible protein 11 (189 aa).

Residues 1–63 are Cytoplasmic-facing; the sequence is MAAKQPPPLM…FAVREPLGLR (63 aa). Residue serine 14 is modified to Phosphoserine. The chain crosses the membrane as a helical span at residues 64 to 84; it reads VWQFVSAVLFSGIAIMALAFP. Residues 85–108 are Extracellular-facing; sequence DQLYDAVFDGAQVTSKTPIRLYGG. A helical transmembrane segment spans residues 109-129; that stretch reads ALLSISLIMWNALYTAEKVII. A topological domain (cytoplasmic) is located at residue arginine 130. A helical membrane pass occupies residues 131–151; sequence WTLLTEACYFSVQFLVVTATL. Over 152–159 the chain is Extracellular; it reads AETGLASQ. The chain crosses the membrane as a helical span at residues 160 to 180; that stretch reads GILLLLASRLLFVAISVYYYY. Residues 181–189 are Cytoplasmic-facing; it reads QVGRKPKKV.

It localises to the membrane. The chain is Tumor protein p53-inducible protein 11 (TP53I11) from Bos taurus (Bovine).